A 196-amino-acid polypeptide reads, in one-letter code: Ribosome maturation factor RimP (196 aa).

Over residues 131–145 (KKKAGKKSQGKKAGK) the composition is skewed to basic residues. Residues 131 to 153 (KKKAGKKSQGKKAGKKTPQAPVQ) are disordered.

Belongs to the RimP family.

The protein resides in the cytoplasm. Its function is as follows. Required for maturation of 30S ribosomal subunits. This is Ribosome maturation factor RimP from Corynebacterium urealyticum (strain ATCC 43042 / DSM 7109).